Consider the following 722-residue polypeptide: Polyribonucleotide nucleotidyltransferase (722 aa).

2 residues coordinate Mg(2+): Asp-495 and Asp-501. The KH domain maps to 562 to 621 (PRLLSFRIDPELIGTVIGPGGRTIKGITERTNTKIDIEDGGIVTIASHDGAAAEEAQRII). The S1 motif domain maps to 631-699 (GEIFPGSITR…NRGRINLTLR (69 aa)). Positions 700-722 (GVSQNGGMSNYPEPTPTPVAPLT) are disordered. Positions 712 to 722 (EPTPTPVAPLT) are enriched in pro residues.

This sequence belongs to the polyribonucleotide nucleotidyltransferase family. Mg(2+) is required as a cofactor.

The protein localises to the cytoplasm. It carries out the reaction RNA(n+1) + phosphate = RNA(n) + a ribonucleoside 5'-diphosphate. Functionally, involved in mRNA degradation. Catalyzes the phosphorolysis of single-stranded polyribonucleotides processively in the 3'- to 5'-direction. In Prochlorococcus marinus (strain NATL2A), this protein is Polyribonucleotide nucleotidyltransferase.